Here is a 277-residue protein sequence, read N- to C-terminus: Carbonyl reductase [NADPH] 1 (277 aa).

Residues 10–34, 63–64, and Asn-90 contribute to the NADP(+) site; these read VTGANKGVGFAITRALCRLFSGDVL and DI. Ser-30 carries the phosphoserine modification. Glutathione contacts are provided by residues 95 to 97 and Gln-106; that span reads FKM. Ser-140 lines the substrate pocket. Residue 193 to 194 coordinates glutathione; that stretch reads AY. Tyr-194 acts as the Proton acceptor in catalysis. Residues 194–198 and 231–233 each bind NADP(+); these read YGVTK and VRT.

This sequence belongs to the short-chain dehydrogenases/reductases (SDR) family. In terms of assembly, monomer. As to expression, present in liver and kidney.

It localises to the cytoplasm. It catalyses the reaction a secondary alcohol + NADP(+) = a ketone + NADPH + H(+). It carries out the reaction prostaglandin F2alpha + NADP(+) = prostaglandin E2 + NADPH + H(+). The enzyme catalyses prostaglandin E1 + NADP(+) = 15-oxoprostaglandin E1 + NADPH + H(+). The catalysed reaction is menadione + NADPH + H(+) = menadiol + NADP(+). It catalyses the reaction prostaglandin D2 + NADP(+) = 15-oxoprostaglandin D2 + NADPH + H(+). It carries out the reaction prostaglandin E2 + NADP(+) = 15-oxoprostaglandin E2 + NADPH + H(+). The enzyme catalyses prostaglandin F2alpha + NADP(+) = 15-oxoprostaglandin F2alpha + NADPH + H(+). The catalysed reaction is daunorubicin + NADPH + H(+) = 13-dihydrodaunorubicin + NADP(+). It catalyses the reaction S-nitrosoglutathione + NADPH + H(+) = S-(hydroxysulfenamide)glutathione + NADP(+). It carries out the reaction a primary alcohol + NADP(+) = an aldehyde + NADPH + H(+). The enzyme catalyses cortisol + NADPH + H(+) = 20beta-dihydrocortisol + NADP(+). The catalysed reaction is corticosterone + NADPH + H(+) = 20beta-dihydrocorticosterone + NADP(+). NADPH-dependent reductase with broad substrate specificity. Catalyzes the reduction of a wide variety of carbonyl compounds including quinones, prostaglandins, menadione, plus various xenobiotics. Catalyzes the reduction of the antitumor anthracyclines doxorubicin and daunorubicin to the cardiotoxic compounds doxorubicinol and daunorubicinol. Can convert prostaglandin E to prostaglandin F2-alpha. Can bind glutathione, which explains its higher affinity for glutathione-conjugated substrates. Catalyzes the reduction of S-nitrosoglutathione. In addition, participates in the glucocorticoid metabolism by catalyzing the NADPH-dependent cortisol/corticosterone into 20beta-dihydrocortisol (20b-DHF) or 20beta-corticosterone (20b-DHB), which are weak agonists of NR3C1 and NR3C2 in adipose tissue. The protein is Carbonyl reductase [NADPH] 1 of Oryctolagus cuniculus (Rabbit).